A 416-amino-acid chain; its full sequence is Tryptophan synthase beta chain (416 aa).

Lysine 109 is subject to N6-(pyridoxal phosphate)lysine.

This sequence belongs to the TrpB family. In terms of assembly, tetramer of two alpha and two beta chains. Pyridoxal 5'-phosphate is required as a cofactor.

The enzyme catalyses (1S,2R)-1-C-(indol-3-yl)glycerol 3-phosphate + L-serine = D-glyceraldehyde 3-phosphate + L-tryptophan + H2O. It functions in the pathway amino-acid biosynthesis; L-tryptophan biosynthesis; L-tryptophan from chorismate: step 5/5. Functionally, the beta subunit is responsible for the synthesis of L-tryptophan from indole and L-serine. This Mesorhizobium japonicum (strain LMG 29417 / CECT 9101 / MAFF 303099) (Mesorhizobium loti (strain MAFF 303099)) protein is Tryptophan synthase beta chain.